Consider the following 628-residue polypeptide: 1-deoxy-D-xylulose-5-phosphate synthase (628 aa).

Thiamine diphosphate-binding positions include histidine 80 and glycine 121–serine 123. Aspartate 152 is a binding site for Mg(2+). Residues glycine 153–glycine 154, asparagine 181, tyrosine 289, and glutamate 370 contribute to the thiamine diphosphate site. Mg(2+) is bound at residue asparagine 181.

It belongs to the transketolase family. DXPS subfamily. Homodimer. The cofactor is Mg(2+). Requires thiamine diphosphate as cofactor.

It carries out the reaction D-glyceraldehyde 3-phosphate + pyruvate + H(+) = 1-deoxy-D-xylulose 5-phosphate + CO2. It participates in metabolic intermediate biosynthesis; 1-deoxy-D-xylulose 5-phosphate biosynthesis; 1-deoxy-D-xylulose 5-phosphate from D-glyceraldehyde 3-phosphate and pyruvate: step 1/1. Functionally, catalyzes the acyloin condensation reaction between C atoms 2 and 3 of pyruvate and glyceraldehyde 3-phosphate to yield 1-deoxy-D-xylulose-5-phosphate (DXP). This Alkalilimnicola ehrlichii (strain ATCC BAA-1101 / DSM 17681 / MLHE-1) protein is 1-deoxy-D-xylulose-5-phosphate synthase.